The primary structure comprises 177 residues: ATP synthase subunit delta (177 aa).

Belongs to the ATPase delta chain family. In terms of assembly, F-type ATPases have 2 components, F(1) - the catalytic core - and F(0) - the membrane proton channel. F(1) has five subunits: alpha(3), beta(3), gamma(1), delta(1), epsilon(1). F(0) has three main subunits: a(1), b(2) and c(10-14). The alpha and beta chains form an alternating ring which encloses part of the gamma chain. F(1) is attached to F(0) by a central stalk formed by the gamma and epsilon chains, while a peripheral stalk is formed by the delta and b chains.

The protein localises to the cell inner membrane. Functionally, f(1)F(0) ATP synthase produces ATP from ADP in the presence of a proton or sodium gradient. F-type ATPases consist of two structural domains, F(1) containing the extramembraneous catalytic core and F(0) containing the membrane proton channel, linked together by a central stalk and a peripheral stalk. During catalysis, ATP synthesis in the catalytic domain of F(1) is coupled via a rotary mechanism of the central stalk subunits to proton translocation. This protein is part of the stalk that links CF(0) to CF(1). It either transmits conformational changes from CF(0) to CF(1) or is implicated in proton conduction. This is ATP synthase subunit delta from Sulfurimonas denitrificans (strain ATCC 33889 / DSM 1251) (Thiomicrospira denitrificans (strain ATCC 33889 / DSM 1251)).